The primary structure comprises 92 residues: Small ribosomal subunit protein uS19 (92 aa).

This sequence belongs to the universal ribosomal protein uS19 family.

Protein S19 forms a complex with S13 that binds strongly to the 16S ribosomal RNA. This Enterococcus faecalis (strain ATCC 700802 / V583) protein is Small ribosomal subunit protein uS19.